Reading from the N-terminus, the 189-residue chain is Ras-like protein 1 (189 aa).

10 to 17 is a binding site for GTP; it reads GGGGVGKS. Residues 32–40 carry the Effector region motif; it reads YDPTIEDSY. Residues 57–61 and 116–119 contribute to the GTP site; these read DTAGQ and NKCD. At C186 the chain carries Cysteine methyl ester. Residue C186 is the site of S-geranylgeranyl cysteine attachment. A propeptide spans 187-189 (removed in mature form); that stretch reads LLL.

Belongs to the small GTPase superfamily. Ras family.

It is found in the cell membrane. It carries out the reaction GTP + H2O = GDP + phosphate + H(+). In terms of biological role, ras proteins bind GDP/GTP and possess intrinsic GTPase activity. The chain is Ras-like protein 1 (RAS1) from Physarum polycephalum (Slime mold).